A 1178-amino-acid polypeptide reads, in one-letter code: MLQRSRLLWLAVFITLWVSSDAQDDAKEEENTFDLLQISNINRKTIGAKLFRGPDPAIPAYRFIRFDHIPPFKPEKLKKIVKLIRQNEGFILSATLRQDRQSRGTILALEGPGISERQFEIISNGRANTLDLIYWVDGFQNVISLEDVDLADSQWKNLTVQVTGENYNLYVGCDLIDSFILEEPFYEQLKAENSRMYVAKGSIRENHFRGLLQNIHLIFDTSIEDVLRKKGCQRSQSTEVNTINESTEILHLSPAVTTEYVGEKTEKKAEFCDRSCEELGTMFTELTGLRIVVNNLADNLQKVSEENQIMWELIGPNKTLKNQSVCWQDGRVFADSESWIVDSCTKCTCQDSKIVCHQITCPPVSCADPSFIEGECCPVCSHSDDSEEGWSPWSDWTKCSVTCGSGTQMRGRSCDVTRSACTGPHIQTRMCSFKKCDHRIRQDGGWSHWSPWSSCSVTCGVGNITRIRLCNSPIPQMGGKNCVGNGRETEKCEKAPCPVNGQWGPWSPWSACTVTCGGGIRERSRLCNSPEPQYGGKPCVGDTKQHDMCNKRDCPIDGCLSNPCFPGAECNSYPDGSWSCGPCPAGFLGNGTVCEDLDECIAVSDVCFKVNQVHRCVNTNPGFHCLPCPPRYKGSQPYGVGLEVAKTEKQVCEPENPCKDKTHSCHKSAECIYLGHFSDPMYKCECRTGYAGDGRICGEDSDLDGWPNNNLVCAANATYHCVKDNCPLLPNSGQEDFDKDGKGDACDEDDDNDGVEDDKDNCPLLFNPRQFDYDKDEVGDRCDNCPYVHNPAQIDTDNNGEGDSCAVDIDGDDIFNERDNCPYVYNTDQSDTDGDGVGDQCDNCPLMHNPDQTDADNDLVGDQCDNNEDIDEDGHQNNQDNCPYIPNANQADHDKDGKGDACDPDDDNDGIPDDRDNCRLRYNPEQEDSDGDGRGDICKDDFDDDNVPDIFDVCPENNAISETDFRKFQMVPLDPKGTAQIDPNWVIRHQGKELVQTANSDPGIAVGYDEFSSVDFSGTFYVNTDRDDDYAGFVFGYQSSSRFYVLMWKQVTQTYWEDKPTRAYGYSGVSLKVVNSTTGTGEHLRNALWHTGNTPGQVRTLWHDPKNIGWKDYTAYRWHLIHRPKTGLIKVLVYEGKQVMVDSGPIYDTTFAGGRLGLFVFSQEMVYFSDLKYECRDA.

A signal peptide spans 1–22 (MLQRSRLLWLAVFITLWVSSDA). One can recognise a Laminin G-like domain in the interval 25-221 (DAKEEENTFD…LQNIHLIFDT (197 aa)). 4 N-linked (GlcNAc...) asparagine glycosylation sites follow: asparagine 157, asparagine 244, asparagine 317, and asparagine 322. Residues 324-381 (SVCWQDGRVFADSESWIVDSCTKCTCQDSKIVCHQITCPPVSCADPSFIEGECCPVCS) form the VWFC domain. 3 consecutive TSP type-1 domains span residues 387–437 (EEGW…KKCD), 443–498 (DGGW…APCP), and 500–555 (NGQW…RDCP). 27 disulfide bridges follow: cysteine 399/cysteine 431, cysteine 403/cysteine 436, cysteine 414/cysteine 421, cysteine 455/cysteine 492, cysteine 459/cysteine 497, cysteine 470/cysteine 482, cysteine 512/cysteine 549, cysteine 516/cysteine 554, cysteine 527/cysteine 539, cysteine 559/cysteine 570, cysteine 564/cysteine 580, cysteine 583/cysteine 594, cysteine 600/cysteine 616, cysteine 607/cysteine 625, cysteine 628/cysteine 652, cysteine 658/cysteine 671, cysteine 665/cysteine 684, cysteine 686/cysteine 697, cysteine 713/cysteine 721, cysteine 726/cysteine 746, cysteine 762/cysteine 782, cysteine 785/cysteine 805, cysteine 821/cysteine 841, cysteine 844/cysteine 864, cysteine 882/cysteine 902, cysteine 918/cysteine 938, and cysteine 954/cysteine 1175. Asparagine 463 is a glycosylation site (N-linked (GlcNAc...) asparagine). The region spanning 555–595 (PIDGCLSNPCFPGAECNSYPDGSWSCGPCPAGFLGNGTVCE) is the EGF-like 1 domain. Asparagine 590 carries an N-linked (GlcNAc...) asparagine glycan. The EGF-like 2 domain maps to 654 to 698 (PENPCKDKTHSCHKSAECIYLGHFSDPMYKCECRTGYAGDGRICG). TSP type-3 repeat units follow at residues 699–734 (EDSD…NSGQ), 735–770 (EDFD…NPRQ), 771–793 (FDYD…NPAQ), 794–829 (IDTD…NTDQ), 830–852 (SDTD…NPDQ), 853–890 (TDAD…NANQ), 891–926 (ADHD…NPEQ), and 927–962 (EDSD…AISE). Asparagine 716 carries an N-linked (GlcNAc...) asparagine glycan. The disordered stretch occupies residues 737-760 (FDKDGKGDACDEDDDNDGVEDDKD). Residues 746 to 759 (CDEDDDNDGVEDDK) show a composition bias toward acidic residues. The tract at residues 852-941 (QTDADNDLVG…DGRGDICKDD (90 aa)) is disordered. The span at 853–872 (TDADNDLVGDQCDNNEDIDE) shows a compositional bias: acidic residues. Over residues 891-901 (ADHDKDGKGDA) the composition is skewed to basic and acidic residues. Residues 902 to 911 (CDPDDDNDGI) are compositionally biased toward acidic residues. 2 stretches are compositionally biased toward basic and acidic residues: residues 912 to 924 (PDDR…RYNP) and 931 to 940 (GDGRGDICKD). Residues 934–936 (RGD) carry the Cell attachment site motif. The TSP C-terminal domain occupies 966 to 1178 (RKFQMVPLDP…SDLKYECRDA (213 aa)). N-linked (GlcNAc...) asparagine glycosylation occurs at asparagine 1075.

It belongs to the thrombospondin family. Homotrimer; disulfide-linked. Can bind to fibrinogen, fibronectin, laminin and type V collagen.

Adhesive glycoprotein that mediates cell-to-cell and cell-to-matrix interactions. The chain is Thrombospondin-2 (THBS2) from Gallus gallus (Chicken).